The following is a 241-amino-acid chain: NEP1-interacting protein 2 (241 aa).

Positions 1-20 (MASSSSSSYRFQSGSYPLSS) are disordered. The Lumenal, thylakoid segment spans residues 1-36 (MASSSSSSYRFQSGSYPLSSSPSLGNFVERIKDACH). Residues 37 to 57 (FLVSAVLGTIISAILTFFFAL) traverse the membrane as a helical segment. Topologically, residues 58-76 (VGTLLGALTGALIGQETES) are stromal. A helical membrane pass occupies residues 77-97 (GFIRGAAIGAISGAVFSIEVF). The Lumenal, thylakoid segment spans residues 98–109 (ESSLDLWKSDES). The helical transmembrane segment at 110–130 (GFGCFLYLIDVIVSLLSGRLV) threads the bilayer. Residues 131-241 (RERIGPAMLS…GSCPMCRRDI (111 aa)) are Stromal-facing. An RING-type; atypical zinc finger spans residues 196–238 (CSVCLQDFQLGETVRSLPHCHHMFHLPCIDNWLLRHGSCPMCR).

Belongs to the RING-type zinc finger family. NIP subfamily. In terms of assembly, interacts with RPOT2.

The protein resides in the plastid. It localises to the chloroplast thylakoid membrane. Its function is as follows. Intrinsic thylakoid membrane protein that fixes RPOT2 on the stromal side of the thylakoid membrane. The protein is NEP1-interacting protein 2 (NIP2) of Arabidopsis thaliana (Mouse-ear cress).